We begin with the raw amino-acid sequence, 364 residues long: MLYFLAETIFGFICQYVPIGFWNGYSPAPTDRYRRLDLKSSQGFRAEPNLAPLPTTKPRRERYYGPNQIIRAPLDYLLSIPGKDIRGKLINAFNEWLQLPDDKLAIVKEVINLLHTASLLIDDIQDGSRLRRGRPVAHEVFGVAQTINAANYAYFLQQERLSEIGDPRAFHIFTNALLDLHRGQGMDLYWREAVVCPTEEEYIRMVIYKTGGLFRLALELMQVQSNSTTDFSELVELLGIIFQIRDDYMNLQSGLYAEKKGSMEDLTEGKFSYPVIHSIHAAPENSMLVDILKQRTEDNVVKVRAVHYMESTGSFQYCRENLARLTKQARHHVKELEVSLGPNRGIHAILDLLHVQQPNEKPLV.

The isopentenyl diphosphate site is built by lysine 83, arginine 86, and histidine 115. Residues aspartate 122 and aspartate 126 each contribute to the Mg(2+) site. Arginine 131 lines the dimethylallyl diphosphate pocket. Arginine 132 provides a ligand contact to isopentenyl diphosphate. 3 residues coordinate dimethylallyl diphosphate: lysine 209, threonine 210, and glutamine 243. Aspartate 246 contacts Mg(2+). Dimethylallyl diphosphate contacts are provided by asparagine 250, lysine 260, and lysine 270.

This sequence belongs to the FPP/GGPP synthase family. Mg(2+) serves as cofactor.

It catalyses the reaction isopentenyl diphosphate + dimethylallyl diphosphate = (2E)-geranyl diphosphate + diphosphate. The catalysed reaction is isopentenyl diphosphate + (2E)-geranyl diphosphate = (2E,6E)-farnesyl diphosphate + diphosphate. It carries out the reaction isopentenyl diphosphate + (2E,6E)-farnesyl diphosphate = (2E,6E,10E)-geranylgeranyl diphosphate + diphosphate. It participates in secondary metabolite biosynthesis. Geranylgeranyl pyrophosphate synthase; part of the gene cluster that mediates the biosynthesis of the indole diterpenes janthitremanes such as shearinine K or shearinine A. The geranylgeranyl diphosphate (GGPP) synthase janG catalyzes the first step in janthitremane biosynthesis via conversion of farnesyl pyrophosphate and isopentyl pyrophosphate into geranylgeranyl pyrophosphate (GGPP). Condensation of indole-3-glycerol phosphate with GGPP by the prenyl transferase janC then forms 3-geranylgeranylindole (3-GGI). Epoxidation by the FAD-dependent monooxygenase janM leads to a epoxidized-GGI that is substrate of the terpene cyclase janB for cyclization to yield paspaline. Paspaline is subsequently converted to 13-desoxypaspaline by the cytochrome P450 monooxygenase janP, via beta-PC-M6 in a series of alpha-face oxidations. The cytochrome P450 monooxygenase janQ is proposed to carry out sequential beta-face oxidation steps at C-7 and C-13 of 13-desoxypaspaline to form paspalicine and paspalinine respectively. The indole diterpene prenyltransferase janD may then convert paspalinine into shearinine K which is substrate of janO and/or additional enzymes for oxidation and cyclization to generate shearinine A. This chain is Geranylgeranyl pyrophosphate synthase janG, found in Penicillium janthinellum (Penicillium vitale).